Consider the following 693-residue polypeptide: MPLTRSKSLPATENGGSDRETLQSGRSVAGILYKWTNYGKGWRSRWFLLRDGILSYSKIRRPENVNLLSPSDDLRLIGDISTDRLLRMKSCSGRSRRKHHKNIGIVHLKVSSYRESKSDHRKFYIFTATKTLHLRTDSRSDRAAWLQALASTRGIVPLQSINGDFSFVSPKDLSISTERLKKRLFEEGMNESLVKECEQIVDSEFCEVQEQIKLLHEERKKLLDALRQLEMANLEAEASGIHDDVYQLRNHKYSSLGRGKYSECSTSASSDDKQEFEDISEEDEASFHDTKESFGEPDVGSVLTHFKRRTKLPDPAEKERGVSLWSMIKDNVGKDLTRVCLPVYFNEPISSLQKCFEDLEYSYLLDQAYEYGKSGKSLLRALNVAAFAVSGYASTEGRHCKPFNPLLGETYEADFPEKGIRFFSEKVSHHPTVIACHCEGKGWKFWGDTNLRSKFWGRSIQLEPVGILTLEFDDGEIFQWSKVTTTIYNILLGKLYCDHHGIMKIRGNRQYSCMLKFKEQSILDRNPHQVNGFVEDVTGKKAATVFGKWNDSLYYVAGDGINKASASLLWKATKAPPNVTRYNFTSFAMTLNELIPGLEEKLPPTDSRLRPDQRHLENGEYEKANEEKQRLERRQRMSRQIQESGWRPRWFEPQGESESYKYTGGYWEARDVKSWDDCPNIFGEFTEEVADCA.

Over residues 1 to 15 the composition is skewed to polar residues; it reads MPLTRSKSLPATENG. The segment at 1–22 is disordered; it reads MPLTRSKSLPATENGGSDRETL. Residues 25–154 enclose the PH domain; the sequence is GRSVAGILYK…WLQALASTRG (130 aa). A coiled-coil region spans residues 207 to 239; sequence EVQEQIKLLHEERKKLLDALRQLEMANLEAEAS. 2 disordered regions span residues 256–298 and 600–639; these read LGRG…GEPD and EKLP…RMSR. The segment covering 274 to 284 has biased composition (acidic residues); sequence QEFEDISEEDE. 2 stretches are compositionally biased toward basic and acidic residues: residues 285-294 and 600-635; these read ASFHDTKESF and EKLP…ERRQ. A coiled-coil region spans residues 612 to 643; sequence DQRHLENGEYEKANEEKQRLERRQRMSRQIQE.

It belongs to the OSBP family. As to expression, expressed in roots, leaves, stems and flowers.

May be involved in the transport of sterols. This Arabidopsis thaliana (Mouse-ear cress) protein is Oxysterol-binding protein-related protein 2B (ORP2B).